The chain runs to 433 residues: Homogentisate 1,2-dioxygenase (433 aa).

His288 acts as the Proton acceptor in catalysis. Fe cation-binding residues include His331 and Glu337. Homogentisate is bound by residues Tyr346 and His367. His367 contacts Fe cation.

The protein belongs to the homogentisate dioxygenase family. In terms of assembly, hexamer; dimer of trimers. Requires Fe cation as cofactor.

The catalysed reaction is homogentisate + O2 = 4-maleylacetoacetate + H(+). The protein operates within amino-acid degradation; L-phenylalanine degradation; acetoacetate and fumarate from L-phenylalanine: step 4/6. Its function is as follows. Involved in the catabolism of homogentisate (2,5-dihydroxyphenylacetate or 2,5-OH-PhAc), a central intermediate in the degradation of phenylalanine and tyrosine. Catalyzes the oxidative ring cleavage of the ar omatic ring of 2,5-dihydroxyphenylacetate to yield maleylacetoacetate. This is Homogentisate 1,2-dioxygenase from Pseudomonas putida (strain ATCC 47054 / DSM 6125 / CFBP 8728 / NCIMB 11950 / KT2440).